Here is a 202-residue protein sequence, read N- to C-terminus: N-(5'-phosphoribosyl)anthranilate isomerase (202 aa).

This sequence belongs to the TrpF family.

The catalysed reaction is N-(5-phospho-beta-D-ribosyl)anthranilate = 1-(2-carboxyphenylamino)-1-deoxy-D-ribulose 5-phosphate. It functions in the pathway amino-acid biosynthesis; L-tryptophan biosynthesis; L-tryptophan from chorismate: step 3/5. This Listeria monocytogenes serovar 1/2a (strain ATCC BAA-679 / EGD-e) protein is N-(5'-phosphoribosyl)anthranilate isomerase.